A 125-amino-acid polypeptide reads, in one-letter code: Ribosome-binding factor A (125 aa).

Belongs to the RbfA family. Monomer. Binds 30S ribosomal subunits, but not 50S ribosomal subunits or 70S ribosomes.

Its subcellular location is the cytoplasm. One of several proteins that assist in the late maturation steps of the functional core of the 30S ribosomal subunit. Associates with free 30S ribosomal subunits (but not with 30S subunits that are part of 70S ribosomes or polysomes). Required for efficient processing of 16S rRNA. May interact with the 5'-terminal helix region of 16S rRNA. The sequence is that of Ribosome-binding factor A from Thermosipho melanesiensis (strain DSM 12029 / CIP 104789 / BI429).